An 85-amino-acid polypeptide reads, in one-letter code: MPLRVTVLYCGAUGYKPKYERLRAELEKRFPGALEMRGQGTQEVTGWFEVTVGSRLVHSKKNGDGFVDTDAKLQRIVAAIQAALP.

Residues 10–13 (CGAU) constitute a cross-link (cysteinyl-selenocysteine (Cys-Sec); redox-active). Sec-13 is a non-standard amino acid (selenocysteine).

This sequence belongs to the SelWTH family. Selenoprotein W subfamily. Expressed ubiquitously with predominant expression in the pituitary, spinal cord, sciatic nerve, cerebral cortex, cerebral nuclei, thalamus, cerebellum, muscle, cartilage, trachea, gizzard and artery. Weakly expressed in pancreas, testis, ovary, kidney and veins.

The protein resides in the cytoplasm. Plays a role as a glutathione (GSH)-dependent antioxidant. May be involved in a redox-related process. May play a role in the myopathies of selenium deficiency. In Gallus gallus (Chicken), this protein is Selenoprotein W.